The following is a 343-amino-acid chain: uncharacterized protein (343 aa).

The segment at 66–89 (TQNPEPTSASTPPSASASSLPNGA) is disordered. Residues 71-84 (PTSASTPPSASASS) are compositionally biased toward low complexity. A helical transmembrane segment spans residues 96-116 (GVIAGPIVGVLGGLIVLVIIF). 2 disordered regions span residues 161–191 (GGYQ…NDTR) and 252–343 (GRPL…SEHF). Residues 165-188 (MHSTPWASSPRNSTIPQRSQSFYN) are compositionally biased toward polar residues. Basic and acidic residues predominate over residues 280-289 (SNDDSDETKL). Positions 290 to 299 (KQSSTESSSE) are enriched in low complexity. Composition is skewed to basic and acidic residues over residues 301 to 311 (LDEKDKFDKNS) and 322 to 333 (SSYEHEISEEHK). Over residues 334–343 (KHSKKRSEHF) the composition is skewed to basic residues.

The protein localises to the golgi apparatus membrane. This is an uncharacterized protein from Schizosaccharomyces pombe (strain 972 / ATCC 24843) (Fission yeast).